Here is a 157-residue protein sequence, read N- to C-terminus: Large ribosomal subunit protein eL24 (157 aa).

A disordered region spans residues 94 to 157; that stretch reads RNQKPEVRKA…ISAPRVGGKR (64 aa). A compositionally biased stretch (basic and acidic residues) spans 96-117; the sequence is QKPEVRKAQREQAIRAAKESKK. Over residues 123–140 the composition is skewed to low complexity; it reads KKPAAASAKTSAKTAQKP.

The protein belongs to the eukaryotic ribosomal protein eL24 family. As to quaternary structure, component of the large ribosomal subunit.

The protein resides in the cytoplasm. Functionally, component of the large ribosomal subunit. The ribosome is a large ribonucleoprotein complex responsible for the synthesis of proteins in the cell. This chain is Large ribosomal subunit protein eL24 (rpl24), found in Gillichthys mirabilis (Long-jawed mudsucker).